The primary structure comprises 411 residues: [Pyruvate dehydrogenase (acetyl-transferring)] kinase isozyme 4, mitochondrial (411 aa).

Residues 138–368 (IIEYKDACTV…DAIIYLKALS (231 aa)) enclose the Histidine kinase domain. ATP-binding positions include 254-261 (ELFKNAMR), Asp-293, 312-313 (ST), and 329-334 (GFGYGL).

It belongs to the PDK/BCKDK protein kinase family. In terms of assembly, homodimer. Interacts with the pyruvate dehydrogenase complex subunit DLAT, and is part of the multimeric pyruvate dehydrogenase complex that contains multiple copies of pyruvate dehydrogenase (E1), dihydrolipoamide acetyltransferase (DLAT, E2) and lipoamide dehydrogenase (DLD, E3). Ubiquitous; highest levels of expression in heart and skeletal muscle.

The protein resides in the mitochondrion matrix. The enzyme catalyses L-seryl-[pyruvate dehydrogenase E1 alpha subunit] + ATP = O-phospho-L-seryl-[pyruvate dehydrogenase E1 alpha subunit] + ADP + H(+). Functionally, kinase that plays a key role in regulation of glucose and fatty acid metabolism and homeostasis via phosphorylation of the pyruvate dehydrogenase subunits PDHA1 and PDHA2. This inhibits pyruvate dehydrogenase activity, and thereby regulates metabolite flux through the tricarboxylic acid cycle, down-regulates aerobic respiration and inhibits the formation of acetyl-coenzyme A from pyruvate. Inhibition of pyruvate dehydrogenase decreases glucose utilization and increases fat metabolism in response to prolonged fasting and starvation. Plays an important role in maintaining normal blood glucose levels under starvation, and is involved in the insulin signaling cascade. Via its regulation of pyruvate dehydrogenase activity, plays an important role in maintaining normal blood pH and in preventing the accumulation of ketone bodies under starvation. In the fed state, mediates cellular responses to glucose levels and to a high-fat diet. Regulates both fatty acid oxidation and de novo fatty acid biosynthesis. Plays a role in the generation of reactive oxygen species. Protects detached epithelial cells against anoikis. Plays a role in cell proliferation via its role in regulating carbohydrate and fatty acid metabolism. This Homo sapiens (Human) protein is [Pyruvate dehydrogenase (acetyl-transferring)] kinase isozyme 4, mitochondrial (PDK4).